We begin with the raw amino-acid sequence, 515 residues long: Cytochrome P450 1A1 (515 aa).

Residue F225 participates in substrate binding. Heme is bound at residue C459.

Belongs to the cytochrome P450 family. The cofactor is heme.

Its subcellular location is the endoplasmic reticulum membrane. It is found in the microsome membrane. The enzyme catalyses an organic molecule + reduced [NADPH--hemoprotein reductase] + O2 = an alcohol + oxidized [NADPH--hemoprotein reductase] + H2O + H(+). In terms of biological role, cytochromes P450 are a group of heme-thiolate monooxygenases. They oxidize a variety of structurally unrelated compounds, including steroids, fatty acids, and xenobiotics. In Microgadus tomcod (Atlantic tomcod), this protein is Cytochrome P450 1A1 (cyp1a1).